A 107-amino-acid polypeptide reads, in one-letter code: IQ domain-containing protein F6 (107 aa).

The region spanning 42 to 71 is the IQ domain; it reads QEWAVVKVQAQVRMWQARRRFLQARQAACI.

The polypeptide is IQ domain-containing protein F6 (IQCF6) (Homo sapiens (Human)).